Consider the following 200-residue polypeptide: Trem-like transcript 4 protein (200 aa).

The N-terminal stretch at Met-1–Pro-25 is a signal peptide. Residues Glu-26–Ser-126 form the Ig-like V-type domain. A disulfide bridge connects residues Cys-40 and Cys-109. N-linked (GlcNAc...) asparagine glycosylation occurs at Asn-93.

It is found in the secreted. Positively regulates Toll-like receptor TLR7 signaling in macrophages. This is Trem-like transcript 4 protein (TREML4) from Homo sapiens (Human).